Consider the following 160-residue polypeptide: Protein-export protein SecB (160 aa).

It belongs to the SecB family. In terms of assembly, homotetramer, a dimer of dimers. One homotetramer interacts with 1 SecA dimer.

The protein resides in the cytoplasm. Its function is as follows. One of the proteins required for the normal export of preproteins out of the cell cytoplasm. It is a molecular chaperone that binds to a subset of precursor proteins, maintaining them in a translocation-competent state. It also specifically binds to its receptor SecA. The protein is Protein-export protein SecB of Burkholderia lata (strain ATCC 17760 / DSM 23089 / LMG 22485 / NCIMB 9086 / R18194 / 383).